Reading from the N-terminus, the 188-residue chain is Large ribosomal subunit protein eL18 (188 aa).

Lysine 119 participates in a covalent cross-link: Glycyl lysine isopeptide (Lys-Gly) (interchain with G-Cter in SUMO2). Serine 130 carries the phosphoserine modification. Residues 150 to 188 (RHFGKAPRTPHSHTKPYVRSKGRKFERARGRWASRGYKN) form a disordered region. 2 stretches are compositionally biased toward basic residues: residues 151–171 (HFGKAPRTPHSHTKPYVRSKG) and 179–188 (GRWASRGYKN). The residue at position 158 (threonine 158) is a Phosphothreonine. A Glycyl lysine isopeptide (Lys-Gly) (interchain with G-Cter in SUMO2) cross-link involves residue lysine 164.

It belongs to the eukaryotic ribosomal protein eL18 family. Component of the large ribosomal subunit.

Its subcellular location is the cytoplasm. The protein localises to the cytosol. It is found in the rough endoplasmic reticulum. In terms of biological role, component of the large ribosomal subunit. The ribosome is a large ribonucleoprotein complex responsible for the synthesis of proteins in the cell. In Oryctolagus cuniculus (Rabbit), this protein is Large ribosomal subunit protein eL18 (RPL18).